We begin with the raw amino-acid sequence, 333 residues long: Succinylglutamate desuccinylase (333 aa).

His56, Glu59, and His149 together coordinate Zn(2+). Residue Glu214 is part of the active site.

The protein belongs to the AspA/AstE family. Succinylglutamate desuccinylase subfamily. The cofactor is Zn(2+).

The catalysed reaction is N-succinyl-L-glutamate + H2O = L-glutamate + succinate. Its pathway is amino-acid degradation; L-arginine degradation via AST pathway; L-glutamate and succinate from L-arginine: step 5/5. Functionally, transforms N(2)-succinylglutamate into succinate and glutamate. This is Succinylglutamate desuccinylase from Chromobacterium violaceum (strain ATCC 12472 / DSM 30191 / JCM 1249 / CCUG 213 / NBRC 12614 / NCIMB 9131 / NCTC 9757 / MK).